The following is a 329-amino-acid chain: NADH-quinone oxidoreductase subunit H (329 aa).

9 helical membrane-spanning segments follow: residues 9–29, 42–62, 75–95, 117–137, 154–174, 188–208, 238–258, 260–280, and 309–329; these read LIKILILVAVFSALGGFATYI, GPCYVGPFGLLQVAADGIKLF, FIFTLAPIIAMVSAFVSMAPI, IGFLFFLAVGAAGIYAPILAG, IQLLSFEVVSTLTILAPLMVV, GGFLDWLVFKQPLAFVLFLIA, LKWGMFFLAEYAHLFAFSFVI, IVFFGGFNAWGFIPGGLAILI, and WKIMLPLALLNIVLTGIIILI.

The protein belongs to the complex I subunit 1 family. In terms of assembly, NDH-1 is composed of 14 different subunits. Subunits NuoA, H, J, K, L, M, N constitute the membrane sector of the complex.

The protein resides in the cell inner membrane. The catalysed reaction is a quinone + NADH + 5 H(+)(in) = a quinol + NAD(+) + 4 H(+)(out). Functionally, NDH-1 shuttles electrons from NADH, via FMN and iron-sulfur (Fe-S) centers, to quinones in the respiratory chain. The immediate electron acceptor for the enzyme in this species is believed to be ubiquinone. Couples the redox reaction to proton translocation (for every two electrons transferred, four hydrogen ions are translocated across the cytoplasmic membrane), and thus conserves the redox energy in a proton gradient. This subunit may bind ubiquinone. This is NADH-quinone oxidoreductase subunit H from Helicobacter pylori (strain G27).